Here is a 293-residue protein sequence, read N- to C-terminus: MNFVTTLTYLLPHRMLSSLARHVAYCQHPLIKQWLIDTVIAKFDVNLSEAAEPDAHAYPSFNAFFTRSLKAGIRPPDPNPDTLLMPADGRISQLGPIREGRIFQAKGQSFTATELLGDTAAASAFTNGLFATVYLSPRDYHRVHMPCTGQLLKTVHVPGRLFSVGPDAVRQIPRLFARNERLVCHFDTTFGPMVLVMVGALLVSGVETVWGGVEIPAYGDRITYKDYQGRNIAIERFAEMARFNYGSTVIVLLPPNVLTLAPHLTAESPVTLGQALAHRLSLNHSTQAPTQEK.

Residues Asp-88, His-144, and Ser-247 each act as charge relay system; for autoendoproteolytic cleavage activity in the active site. The active-site Schiff-base intermediate with substrate; via pyruvic acid; for decarboxylase activity is the Ser-247. Pyruvic acid (Ser); by autocatalysis is present on Ser-247.

This sequence belongs to the phosphatidylserine decarboxylase family. PSD-B subfamily. Prokaryotic type I sub-subfamily. As to quaternary structure, heterodimer of a large membrane-associated beta subunit and a small pyruvoyl-containing alpha subunit. Requires pyruvate as cofactor. Post-translationally, is synthesized initially as an inactive proenzyme. Formation of the active enzyme involves a self-maturation process in which the active site pyruvoyl group is generated from an internal serine residue via an autocatalytic post-translational modification. Two non-identical subunits are generated from the proenzyme in this reaction, and the pyruvate is formed at the N-terminus of the alpha chain, which is derived from the carboxyl end of the proenzyme. The autoendoproteolytic cleavage occurs by a canonical serine protease mechanism, in which the side chain hydroxyl group of the serine supplies its oxygen atom to form the C-terminus of the beta chain, while the remainder of the serine residue undergoes an oxidative deamination to produce ammonia and the pyruvoyl prosthetic group on the alpha chain. During this reaction, the Ser that is part of the protease active site of the proenzyme becomes the pyruvoyl prosthetic group, which constitutes an essential element of the active site of the mature decarboxylase.

The protein localises to the cell membrane. It catalyses the reaction a 1,2-diacyl-sn-glycero-3-phospho-L-serine + H(+) = a 1,2-diacyl-sn-glycero-3-phosphoethanolamine + CO2. Its pathway is phospholipid metabolism; phosphatidylethanolamine biosynthesis; phosphatidylethanolamine from CDP-diacylglycerol: step 2/2. Functionally, catalyzes the formation of phosphatidylethanolamine (PtdEtn) from phosphatidylserine (PtdSer). The chain is Phosphatidylserine decarboxylase proenzyme from Xylella fastidiosa (strain M23).